The following is a 231-amino-acid chain: MKRAVVVFSGGQDSTTCLAQALHQYDEVHCVTFDYGQRHRAEIDVARDLALKLGARAHKVLDVTLLSELAVSSLTRDNIPVPDYEPDADGIPNTFVPGRNILFLTLAAIYAYQVKAEAVITGVCETDFSGYPDCRDEFVKALNHAVTLGMAKDIRFETPLMWIDKAETWALADYWGKLDLVREETLTCYNGIKGDGCGQCAACNLRANGLNHYLADKPAVMAAMKQKTGLK.

Residue 8-18 (FSGGQDSTTCL) participates in ATP binding. Cys-188, Cys-197, Cys-200, and Cys-203 together coordinate Zn(2+).

The protein belongs to the QueC family. The cofactor is Zn(2+).

The catalysed reaction is 7-carboxy-7-deazaguanine + NH4(+) + ATP = 7-cyano-7-deazaguanine + ADP + phosphate + H2O + H(+). It functions in the pathway purine metabolism; 7-cyano-7-deazaguanine biosynthesis. Catalyzes the ATP-dependent conversion of 7-carboxy-7-deazaguanine (CDG) to 7-cyano-7-deazaguanine (preQ(0)). In Citrobacter koseri (strain ATCC BAA-895 / CDC 4225-83 / SGSC4696), this protein is 7-cyano-7-deazaguanine synthase.